We begin with the raw amino-acid sequence, 186 residues long: MKKTQYNNLVSSYARVLFHVSGSRLGIIREEVEFLLAFFKDQRDVFVYLSHPMISFAHKKEVMLSINEHLSENLVKFIMVIFANKRSSLLILILEKFLSLARENENEFEITIKSAETLKESDIKIITESLSFLGKIIKVSNVVDPSILGGFVVRYGFNLIDASLKSYLDRLVDLSKMEILKVRNFV.

This sequence belongs to the ATPase delta chain family. In terms of assembly, F-type ATPases have 2 components, F(1) - the catalytic core - and F(0) - the membrane proton channel. F(1) has five subunits: alpha(3), beta(3), gamma(1), delta(1), epsilon(1). F(0) has three main subunits: a(1), b(2) and c(10-14). The alpha and beta chains form an alternating ring which encloses part of the gamma chain. F(1) is attached to F(0) by a central stalk formed by the gamma and epsilon chains, while a peripheral stalk is formed by the delta and b chains.

Its subcellular location is the cell inner membrane. Functionally, f(1)F(0) ATP synthase produces ATP from ADP in the presence of a proton or sodium gradient. F-type ATPases consist of two structural domains, F(1) containing the extramembraneous catalytic core and F(0) containing the membrane proton channel, linked together by a central stalk and a peripheral stalk. During catalysis, ATP synthesis in the catalytic domain of F(1) is coupled via a rotary mechanism of the central stalk subunits to proton translocation. This protein is part of the stalk that links CF(0) to CF(1). It either transmits conformational changes from CF(0) to CF(1) or is implicated in proton conduction. This chain is ATP synthase subunit delta, found in Wolbachia sp. subsp. Drosophila simulans (strain wRi).